The chain runs to 427 residues: Phosphatase PSR1 (427 aa).

2 S-palmitoyl cysteine lipidation sites follow: Cys-9 and Cys-10. Residues 14–34 are compositionally biased toward polar residues; the sequence is TTQSNSNSAYRQQQSSSLNKN. A disordered region spans residues 14-223; the sequence is TTQSNSNSAY…SNDADDEDDE (210 aa). Residues 35–48 are compositionally biased toward basic residues; sequence RSVKHSNTKSRTRG. The span at 49-80 shows a compositional bias: polar residues; the sequence is VHQTNSPPSKTNSAATFSSTERSTGKSGISTN. Basic and acidic residues predominate over residues 104-118; it reads KVEKRISKDDLYEEK. Ser-110 is modified (phosphoserine). Residues 119–130 show a composition bias toward acidic residues; the sequence is YEVDEDEEIDDE. Residues 131–151 show a composition bias toward basic and acidic residues; the sequence is DNRRSRGIVQEKGDAVKDTSR. Residue Lys-154 forms a Glycyl lysine isopeptide (Lys-Gly) (interchain with G-Cter in ubiquitin) linkage. Over residues 155-183 the composition is skewed to low complexity; that stretch reads QQQQQQQQSQPQPQPQSQSQSQSQSQSQQ. Over residues 184–214 the composition is skewed to polar residues; sequence RGPTVQVSSDHLIQDMNLSRVSSSSQASETS. An FCP1 homology domain is found at 253–411; the sequence is STKGKKCLIL…LDIIPLLEDL (159 aa).

Interacts with WHI2.

It localises to the cell membrane. Has phosphatase activity in vitro. Involved in the response to sodium and lithium ion stress (but not to potassium or sorbitol stress) by inducing transcription of the sodium pump ENA1/PMR2. Acts through a calcineurin-independent pathway and is functionally redundant with PSR2. Also involved in the general stress response; acts together with WHI2 to activate stress response element (STRE)-mediated gene expression, possibly through dephosphorylation of MSN2. The sequence is that of Phosphatase PSR1 (PSR1) from Saccharomyces cerevisiae (strain ATCC 204508 / S288c) (Baker's yeast).